The sequence spans 99 residues: Protein Frey (99 aa).

A helical transmembrane segment spans residues 13–29 (AGLSLFALYLVLAAALL). Residues 64–90 (RPKHPWPRGPRPLLSRAQQRKRDGPDM) are disordered.

As to quaternary structure, interacts with SPPL2C (via active sites); the interaction stabilizes FREY1 protein and inhibits SPPL2C proteolytic activity. Interacts with IZUMO1; the interaction retains IZUMO1 at the endoplasmic reticulum membrane and coordinates IZUMO1 complex assembly.

It is found in the endoplasmic reticulum membrane. Key regulator for male fertility expressed transiently in round spermatids where it recruits IZUMO1 at the endoplasmic reticulum (ER) membrane and coordinates the oolemmal binding multimeric complex (IZUMO1 complex) assembly. Upon complete assembly of the IZUMO1 complex, its ER retention is released, facilitating IZUMO1 complex export to the acrosome. Through the interaction with SPPL2C, inhibits its intramembrane protease activity directly accessing the catalytic center of an I-CLiP. This chain is Protein Frey (FREY1), found in Bos taurus (Bovine).